Reading from the N-terminus, the 712-residue chain is MFNFFAAAPKGFEYSLASELKEFGATDVKESVAGVYFSASLELAYRITLWTRLASRIVLVIYKGACDSAEQLYNAAYCIDWPSHFSHKKTFSIDFHGTGGFINNTQFGALKIKDAVVDRFRDDGTPRPDVERVNPDFKIDAHYRNGQLTISMNFSGASLHQRGYRSTTGEAPLKENLAANMLVRSGWQANPITVLDPFCGSGTVLIEAALMAADIAPGLKREKFGFENWQSHNKAMWQVIFDEAQARATLGKTRCKLKFYGSDIEPHLISIAKRNAENAGVAELIEFSVSDALDVTPPVSEGFLISNPPYGERLGNVTELLQLYYQLGDKFKKEFGGWKIAMLCSDVELISSLKLKADKQMKMFNGALECAFNIYTLHANSTRRDVPELPEGVDIIDIAPAFANRIKKNVKQFEKWAKKERIDSYRLYDADLPEYNVAIDRYVDYVVIQEYSAPATIPEAVTKRRISDVLLALPGALGIHPDRITLKTRERQKGANQYQKIDERKVEVITEEYGAKFKLNLTGYLDTGLFLDHRVTRKLVGDKAKGKNVLNLFAYTGSASVHAAIGGAKSVTTIDMSNTYINWAKENFALNGLSGAKYDFIQADCLQWIKDNSHQKYELIFIDPPTFSNSKRMEDSWDVQRDHAEMLGGLIKLLSPNGELIFSNNKRKFKMDIEALNQAGIDVTNIDHLCLPLDYKRNPHIHNVWLLTHAKK.

In terms of domain architecture, THUMP spans 43–154; sequence LAYRITLWTR…NGQLTISMNF (112 aa).

The protein belongs to the methyltransferase superfamily. RlmKL family.

It is found in the cytoplasm. The catalysed reaction is guanosine(2445) in 23S rRNA + S-adenosyl-L-methionine = N(2)-methylguanosine(2445) in 23S rRNA + S-adenosyl-L-homocysteine + H(+). It catalyses the reaction guanosine(2069) in 23S rRNA + S-adenosyl-L-methionine = N(2)-methylguanosine(2069) in 23S rRNA + S-adenosyl-L-homocysteine + H(+). Its function is as follows. Specifically methylates the guanine in position 2445 (m2G2445) and the guanine in position 2069 (m7G2069) of 23S rRNA. This is Ribosomal RNA large subunit methyltransferase K/L from Shewanella frigidimarina (strain NCIMB 400).